Consider the following 466-residue polypeptide: Histidine--tRNA ligase (466 aa).

It belongs to the class-II aminoacyl-tRNA synthetase family. In terms of assembly, homodimer.

Its subcellular location is the cytoplasm. It catalyses the reaction tRNA(His) + L-histidine + ATP = L-histidyl-tRNA(His) + AMP + diphosphate + H(+). This chain is Histidine--tRNA ligase (hisS), found in Bifidobacterium longum (strain NCC 2705).